The primary structure comprises 70 residues: UPF0519 protein D (70 aa).

The protein belongs to the UPF0519 family.

The polypeptide is UPF0519 protein D (Dictyostelium discoideum (Social amoeba)).